The sequence spans 493 residues: MQSTGAPGLAQSAVLQLSAMGERSRELGGALREPERKRRLLLVVVCVALLLDNMLYMVIVPIIPDYLADLRGERGNSSADLDIQIGVLFASKALLQLLVNPLSGTFIDRVGYDLPLLIGLLVMFLSTCIFAFAENYGTLFAARSLQGLGSAFADTSGIAMIADKFTEEAERSRALGIALAFISFGSLVAPPFGGILYEFAGKRVPFIVLACVCLADGVLLLTVVKPFSDRTRENMPVGTPIHRLMVDPYIAVVAGALTVCNIPLAFLEPTIANWMESTMDASKWQMGLVWLPAFLPHVLGVYITVRLAARYPERQWFYGALGMVIIGASSCTVPACKTFGELVFPLCGICFGIALVDTALLPTLAFLVDVRHVSVYGSVYAIADISYSVAYAMGPVVAGQIVHNLGFVQLNLGMGLVNVLYAPALLLLRPVCQIKPSFSERNVLLEEGPSGLYDSIRLEERALRRKGLSAGAGTEHGLRGRSEEEEESGPESA.

At 1–39 (MQSTGAPGLAQSAVLQLSAMGERSRELGGALREPERKRR) the chain is on the cytoplasmic side. The helical transmembrane segment at 40–60 (LLLVVVCVALLLDNMLYMVIV) threads the bilayer. Topologically, residues 61–86 (PIIPDYLADLRGERGNSSADLDIQIG) are lumenal, vesicle. Asn76 carries N-linked (GlcNAc...) asparagine glycosylation. A helical membrane pass occupies residues 87–107 (VLFASKALLQLLVNPLSGTFI). Topologically, residues 108 to 113 (DRVGYD) are cytoplasmic. Residues 114 to 134 (LPLLIGLLVMFLSTCIFAFAE) traverse the membrane as a helical segment. Residues 135-143 (NYGTLFAAR) are Lumenal, vesicle-facing. Residues 144–164 (SLQGLGSAFADTSGIAMIADK) traverse the membrane as a helical segment. Over 165 to 174 (FTEEAERSRA) the chain is Cytoplasmic. Residues 175-195 (LGIALAFISFGSLVAPPFGGI) form a helical membrane-spanning segment. At 196–203 (LYEFAGKR) the chain is on the lumenal, vesicle side. The chain crosses the membrane as a helical span at residues 204–224 (VPFIVLACVCLADGVLLLTVV). Residues 225–247 (KPFSDRTRENMPVGTPIHRLMVD) are Cytoplasmic-facing. The helical transmembrane segment at 248–268 (PYIAVVAGALTVCNIPLAFLE) threads the bilayer. At 269–284 (PTIANWMESTMDASKW) the chain is on the lumenal, vesicle side. Residues 285–305 (QMGLVWLPAFLPHVLGVYITV) traverse the membrane as a helical segment. At 306–315 (RLAARYPERQ) the chain is on the cytoplasmic side. Residues 316–336 (WFYGALGMVIIGASSCTVPAC) traverse the membrane as a helical segment. Residues 337-347 (KTFGELVFPLC) are Lumenal, vesicle-facing. The helical transmembrane segment at 348–368 (GICFGIALVDTALLPTLAFLV) threads the bilayer. Topologically, residues 369–378 (DVRHVSVYGS) are cytoplasmic. Residues 379–399 (VYAIADISYSVAYAMGPVVAG) traverse the membrane as a helical segment. Topologically, residues 400–406 (QIVHNLG) are lumenal, vesicle. The chain crosses the membrane as a helical span at residues 407 to 427 (FVQLNLGMGLVNVLYAPALLL). Over 428 to 493 (LRPVCQIKPS…EEEESGPESA (66 aa)) the chain is Cytoplasmic. A disordered region spans residues 467 to 493 (GLSAGAGTEHGLRGRSEEEEESGPESA). A compositionally biased stretch (acidic residues) spans 483–493 (EEEEESGPESA).

This sequence belongs to the major facilitator superfamily. Vesicular transporter family.

The protein resides in the membrane. Functionally, involved in acetylcholine transport into synaptic vesicles. This Danio rerio (Zebrafish) protein is Probable vesicular acetylcholine transporter-B (slc18a3b).